The primary structure comprises 346 residues: tRNA N6-adenosine threonylcarbamoyltransferase (346 aa).

His-111 and His-115 together coordinate Fe cation. Residues 134–138, Asp-167, Gly-180, and Asn-279 contribute to the substrate site; that span reads LVSGG. Asp-307 lines the Fe cation pocket.

The protein belongs to the KAE1 / TsaD family. Fe(2+) is required as a cofactor.

Its subcellular location is the cytoplasm. The enzyme catalyses L-threonylcarbamoyladenylate + adenosine(37) in tRNA = N(6)-L-threonylcarbamoyladenosine(37) in tRNA + AMP + H(+). Functionally, required for the formation of a threonylcarbamoyl group on adenosine at position 37 (t(6)A37) in tRNAs that read codons beginning with adenine. Is involved in the transfer of the threonylcarbamoyl moiety of threonylcarbamoyl-AMP (TC-AMP) to the N6 group of A37, together with TsaE and TsaB. TsaD likely plays a direct catalytic role in this reaction. The chain is tRNA N6-adenosine threonylcarbamoyltransferase from Burkholderia lata (strain ATCC 17760 / DSM 23089 / LMG 22485 / NCIMB 9086 / R18194 / 383).